A 301-amino-acid chain; its full sequence is uncharacterized protein (301 aa).

2 disordered regions span residues 56 to 126 and 149 to 173; these read ESPT…ESDL and LSTE…DASS. Residues 71–82 show a composition bias toward basic and acidic residues; sequence VQKENQKPKDLN. The segment covering 93 to 102 has biased composition (polar residues); that stretch reads KNSSGLVSQI. Positions 161–173 are enriched in low complexity; that stretch reads SNTSSSSMSDASS.

This is an uncharacterized protein from Caenorhabditis elegans.